A 354-amino-acid polypeptide reads, in one-letter code: MNEAIIQLDHIDITFRQKKRVIEAVKDVTVHINQGDIYGIVGYSGAGKSTLVRVINLLQAPTNGKITVDGDVTFEQGKVQLSANALRQKRRDIGMIFQHFNLMAQKTAKENVAFALRHSSLSKTEKEHKVIELLELVGLSERADNYPAQLSGGQKQRVAIARALANDPKILISDEATSALDPKTTKQILALLQELNRKLGLTIVMITHEMQIVKDICNRVAVMQNGVLIEEGSVLDIFSNPKEALTQEFITTATGIDEALEKINQQDIVKHLPANALLAQLKYAGTSTDEPLLNSIYRQFEVTANILYGNIEILDHIPVGDMIVVLEGQAENILAAEKALHEAGVDVSILKRGA.

The 243-residue stretch at 8–250 (LDHIDITFRQ…PKEALTQEFI (243 aa)) folds into the ABC transporter domain. An ATP-binding site is contributed by 42 to 49 (GYSGAGKS).

The protein belongs to the ABC transporter superfamily. Methionine importer (TC 3.A.1.24) family. In terms of assembly, the complex is composed of two ATP-binding proteins (MetN), two transmembrane proteins (MetI) and a solute-binding protein (MetQ).

It is found in the cell membrane. The catalysed reaction is L-methionine(out) + ATP + H2O = L-methionine(in) + ADP + phosphate + H(+). It catalyses the reaction D-methionine(out) + ATP + H2O = D-methionine(in) + ADP + phosphate + H(+). Functionally, part of the ABC transporter complex MetNIQ involved in methionine import. Responsible for energy coupling to the transport system. The sequence is that of Methionine import ATP-binding protein MetN from Streptococcus pyogenes serotype M3 (strain ATCC BAA-595 / MGAS315).